A 293-amino-acid polypeptide reads, in one-letter code: Bifunctional protein FolD (293 aa).

Residues 165–167 (GRS), S190, and I231 contribute to the NADP(+) site.

It belongs to the tetrahydrofolate dehydrogenase/cyclohydrolase family. In terms of assembly, homodimer.

The catalysed reaction is (6R)-5,10-methylene-5,6,7,8-tetrahydrofolate + NADP(+) = (6R)-5,10-methenyltetrahydrofolate + NADPH. The enzyme catalyses (6R)-5,10-methenyltetrahydrofolate + H2O = (6R)-10-formyltetrahydrofolate + H(+). The protein operates within one-carbon metabolism; tetrahydrofolate interconversion. In terms of biological role, catalyzes the oxidation of 5,10-methylenetetrahydrofolate to 5,10-methenyltetrahydrofolate and then the hydrolysis of 5,10-methenyltetrahydrofolate to 10-formyltetrahydrofolate. The protein is Bifunctional protein FolD of Parasynechococcus marenigrum (strain WH8102).